Reading from the N-terminus, the 419-residue chain is L-rhamnose isomerase (419 aa).

Mn(2+) is bound by residues His262, Asp294, and Asp296.

Belongs to the rhamnose isomerase family. Homotetramer. Mn(2+) serves as cofactor.

Its subcellular location is the cytoplasm. It carries out the reaction L-rhamnopyranose = L-rhamnulose. It functions in the pathway carbohydrate degradation; L-rhamnose degradation; glycerone phosphate from L-rhamnose: step 1/3. In terms of biological role, catalyzes the interconversion of L-rhamnose and L-rhamnulose. This is L-rhamnose isomerase from Escherichia fergusonii (strain ATCC 35469 / DSM 13698 / CCUG 18766 / IAM 14443 / JCM 21226 / LMG 7866 / NBRC 102419 / NCTC 12128 / CDC 0568-73).